The primary structure comprises 461 residues: NADP-specific glutamate dehydrogenase (461 aa).

Lys115 is a catalytic residue.

The protein belongs to the Glu/Leu/Phe/Val dehydrogenases family. Homohexamer.

The catalysed reaction is L-glutamate + NADP(+) + H2O = 2-oxoglutarate + NH4(+) + NADPH + H(+). In Penicillium chrysogenum (Penicillium notatum), this protein is NADP-specific glutamate dehydrogenase (GDH).